A 100-amino-acid polypeptide reads, in one-letter code: Aspartyl/glutamyl-tRNA(Asn/Gln) amidotransferase subunit C (100 aa).

This sequence belongs to the GatC family. Heterotrimer of A, B and C subunits.

It catalyses the reaction L-glutamyl-tRNA(Gln) + L-glutamine + ATP + H2O = L-glutaminyl-tRNA(Gln) + L-glutamate + ADP + phosphate + H(+). The catalysed reaction is L-aspartyl-tRNA(Asn) + L-glutamine + ATP + H2O = L-asparaginyl-tRNA(Asn) + L-glutamate + ADP + phosphate + 2 H(+). Allows the formation of correctly charged Asn-tRNA(Asn) or Gln-tRNA(Gln) through the transamidation of misacylated Asp-tRNA(Asn) or Glu-tRNA(Gln) in organisms which lack either or both of asparaginyl-tRNA or glutaminyl-tRNA synthetases. The reaction takes place in the presence of glutamine and ATP through an activated phospho-Asp-tRNA(Asn) or phospho-Glu-tRNA(Gln). This Streptococcus equi subsp. zooepidemicus (strain H70) protein is Aspartyl/glutamyl-tRNA(Asn/Gln) amidotransferase subunit C.